Consider the following 499-residue polypeptide: Cysteine--tRNA ligase (499 aa).

Cysteine 31 lines the Zn(2+) pocket. A 'HIGH' region motif is present at residues 33–43 (VTVYDLCHLGH). 3 residues coordinate Zn(2+): cysteine 215, histidine 240, and glutamate 244. A 'KMSKS' region motif is present at residues 272–276 (KMSKS). Lysine 275 contributes to the ATP binding site.

It belongs to the class-I aminoacyl-tRNA synthetase family. In terms of assembly, monomer. Zn(2+) is required as a cofactor.

Its subcellular location is the cytoplasm. It catalyses the reaction tRNA(Cys) + L-cysteine + ATP = L-cysteinyl-tRNA(Cys) + AMP + diphosphate. The protein is Cysteine--tRNA ligase of Synechococcus sp. (strain WH7803).